The chain runs to 470 residues: MNTGHITQVMGPVVDVRFQSGQLPELNNALRVEQKGADQNAVDVNVTLEVALHLGDDTVRTIAMGSTDGLVRGTEVVDTGAAISVPVGEVTLGRVFNVLGESIDLDEPIPADAERSPIHREAPKFEELSTKTEILETGIKVVDLLAPYIKGGKIGLFGGAGVGKTVLIQELINNIAQEHGGISVFAGVGERTREGNDLYHEMSDSGVIKKTAMVFGQMNEPPGARMRVALSGLTMAEYFRDKQGQDVLLFIDNIFRFTQAGSEVSALLGRMPSAVGYQPTLATEMGQLQERITSTKVGSVTSIQAIYVPADDYTDPAPATTFAHLDATTNLERKLSEMGIYPAVDPLASTSRALSPEIVGEEHYNVARQVQQTLQKYKELQDIIAILGMDELSEEDKLIVARARRIQFFLSQNFHVAEQFTGQPGSYVPVKETIKGFKEILEGKYDDLPEDAFRLVGRIEEVVERAKQMV.

158-165 (GGAGVGKT) contributes to the ATP binding site.

Belongs to the ATPase alpha/beta chains family. F-type ATPases have 2 components, CF(1) - the catalytic core - and CF(0) - the membrane proton channel. CF(1) has five subunits: alpha(3), beta(3), gamma(1), delta(1), epsilon(1). CF(0) has three main subunits: a(1), b(2) and c(9-12). The alpha and beta chains form an alternating ring which encloses part of the gamma chain. CF(1) is attached to CF(0) by a central stalk formed by the gamma and epsilon chains, while a peripheral stalk is formed by the delta and b chains.

The protein localises to the cell membrane. The enzyme catalyses ATP + H2O + 4 H(+)(in) = ADP + phosphate + 5 H(+)(out). In terms of biological role, produces ATP from ADP in the presence of a proton gradient across the membrane. The catalytic sites are hosted primarily by the beta subunits. This is ATP synthase subunit beta from Halalkalibacterium halodurans (strain ATCC BAA-125 / DSM 18197 / FERM 7344 / JCM 9153 / C-125) (Bacillus halodurans).